A 460-amino-acid polypeptide reads, in one-letter code: MLLSFYFNGLLLVGCLLSWGRSDTEGQCHTFTDLNIHNAIIGTGLKVQLLLYTRENPNCAQDLNEDNSTGFQYLNVTRKTVFIIHGYRPTGSPPVWIDDIVKKFLDIQDFNVIVVDWNRGATTVLYHNAAANTRKVADILKRLIDNMLSQGATLDSVYMVGVSLGAHISGFVGKMYNGSIGRITGLDPAGPLFNGKPPEERLHYTDAQFVDVVHTDIDGLGYKESLGHIDFYPNGGTDQPGCPKTILAGSEYFKCDHQRSVYLYISSLKKNCDLVGFPCKSYRDYRIGNCTDCKEFLPLSCPVLGFYADKWKDHLVEKNPPGTKAFFDTAAKDPFCKFHYYLDFMTWSSQTKRGYITIKLKSLDGNVTESKLDKDHATFQQYKETSLLAKFDQDLDQISKISVTFTTGSIIGPKYKLRVLRMRLRPLTNRDRPILCRYDFVLLENIEMEFIPIPCEDTNL.

Residues 1 to 26 form the signal peptide; it reads MLLSFYFNGLLLVGCLLSWGRSDTEG. Asparagine 67 and asparagine 75 each carry an N-linked (GlcNAc...) asparagine glycan. Serine 163 acts as the Nucleophile in catalysis. A glycan (N-linked (GlcNAc...) asparagine) is linked at asparagine 177. The active-site Charge relay system is the aspartate 187. A disulfide bridge links cysteine 242 with cysteine 255. Residue histidine 257 is the Charge relay system of the active site. 2 cysteine pairs are disulfide-bonded: cysteine 279–cysteine 290 and cysteine 293–cysteine 301. Asparagine 289 carries an N-linked (GlcNAc...) asparagine glycan. An N-linked (GlcNAc...) asparagine glycan is attached at asparagine 366. Residues cysteine 436 and cysteine 455 are joined by a disulfide bond.

Belongs to the AB hydrolase superfamily. Lipase family.

It localises to the secreted. The protein localises to the cell membrane. The enzyme catalyses 1-hexadecanoyl-2-(9Z-octadecenoyl)-sn-glycero-3-phosphate + H2O = 2-(9Z-octadecenoyl)-sn-glycero-3-phosphate + hexadecanoate + H(+). Its function is as follows. Hydrolyzes specifically phosphatidic acid (PA) to produce 2-acyl lysophosphatidic acid (LPA; a potent bioactive lipid mediator) and fatty acid. Does not hydrolyze other phospholipids, like phosphatidylserine (PS), phosphatidylcholine (PC) and phosphatidylethanolamine (PE) or triacylglycerol (TG). This Xenopus laevis (African clawed frog) protein is Lipase member H-A (liph-a).